The primary structure comprises 237 residues: Phosphoribosylaminoimidazole-succinocarboxamide synthase (237 aa).

This sequence belongs to the SAICAR synthetase family.

The enzyme catalyses 5-amino-1-(5-phospho-D-ribosyl)imidazole-4-carboxylate + L-aspartate + ATP = (2S)-2-[5-amino-1-(5-phospho-beta-D-ribosyl)imidazole-4-carboxamido]succinate + ADP + phosphate + 2 H(+). Its pathway is purine metabolism; IMP biosynthesis via de novo pathway; 5-amino-1-(5-phospho-D-ribosyl)imidazole-4-carboxamide from 5-amino-1-(5-phospho-D-ribosyl)imidazole-4-carboxylate: step 1/2. This Pseudomonas fluorescens (strain Pf0-1) protein is Phosphoribosylaminoimidazole-succinocarboxamide synthase.